A 434-amino-acid chain; its full sequence is Ataxin-10 homolog (434 aa).

It belongs to the ataxin-10 family.

Its subcellular location is the cytoplasm. The protein localises to the nucleus. May play a role in the regulation of cytokinesis. This chain is Ataxin-10 homolog (mug160), found in Schizosaccharomyces pombe (strain 972 / ATCC 24843) (Fission yeast).